The following is a 476-amino-acid chain: Bifunctional protein GlmU (476 aa).

The pyrophosphorylase stretch occupies residues 1-232; it reads MGDLAAIILA…PVEVMGVNDR (232 aa). Residues 9-12, lysine 23, glutamine 75, and 80-81 each bind UDP-N-acetyl-alpha-D-glucosamine; these read LAAG and GT. Aspartate 105 provides a ligand contact to Mg(2+). 4 residues coordinate UDP-N-acetyl-alpha-D-glucosamine: glycine 142, glutamate 157, asparagine 172, and asparagine 230. Residue asparagine 230 participates in Mg(2+) binding. The interval 233 to 253 is linker; it reads AQLAEAGRFARQRINRELMLD. The segment at 254-476 is N-acetyltransferase; the sequence is GVTIVDPAAT…DGWKLKQRDQ (223 aa). 2 residues coordinate UDP-N-acetyl-alpha-D-glucosamine: arginine 353 and lysine 371. Histidine 383 (proton acceptor) is an active-site residue. 2 residues coordinate UDP-N-acetyl-alpha-D-glucosamine: tyrosine 386 and asparagine 397. Acetyl-CoA contacts are provided by residues 406 to 407, serine 425, alanine 443, and arginine 460; that span reads NY.

In the N-terminal section; belongs to the N-acetylglucosamine-1-phosphate uridyltransferase family. It in the C-terminal section; belongs to the transferase hexapeptide repeat family. Homotrimer. Mg(2+) serves as cofactor.

Its subcellular location is the cytoplasm. It carries out the reaction alpha-D-glucosamine 1-phosphate + acetyl-CoA = N-acetyl-alpha-D-glucosamine 1-phosphate + CoA + H(+). The enzyme catalyses N-acetyl-alpha-D-glucosamine 1-phosphate + UTP + H(+) = UDP-N-acetyl-alpha-D-glucosamine + diphosphate. It participates in nucleotide-sugar biosynthesis; UDP-N-acetyl-alpha-D-glucosamine biosynthesis; N-acetyl-alpha-D-glucosamine 1-phosphate from alpha-D-glucosamine 6-phosphate (route II): step 2/2. The protein operates within nucleotide-sugar biosynthesis; UDP-N-acetyl-alpha-D-glucosamine biosynthesis; UDP-N-acetyl-alpha-D-glucosamine from N-acetyl-alpha-D-glucosamine 1-phosphate: step 1/1. It functions in the pathway bacterial outer membrane biogenesis; LPS lipid A biosynthesis. Its function is as follows. Catalyzes the last two sequential reactions in the de novo biosynthetic pathway for UDP-N-acetylglucosamine (UDP-GlcNAc). The C-terminal domain catalyzes the transfer of acetyl group from acetyl coenzyme A to glucosamine-1-phosphate (GlcN-1-P) to produce N-acetylglucosamine-1-phosphate (GlcNAc-1-P), which is converted into UDP-GlcNAc by the transfer of uridine 5-monophosphate (from uridine 5-triphosphate), a reaction catalyzed by the N-terminal domain. This chain is Bifunctional protein GlmU, found in Geobacter metallireducens (strain ATCC 53774 / DSM 7210 / GS-15).